The chain runs to 505 residues: Maturase K (505 aa).

This sequence belongs to the intron maturase 2 family. MatK subfamily.

It is found in the plastid. It localises to the chloroplast. In terms of biological role, usually encoded in the trnK tRNA gene intron. Probably assists in splicing its own and other chloroplast group II introns. This is Maturase K from Allamanda cathartica (Yellow allamanda).